We begin with the raw amino-acid sequence, 748 residues long: MDAPVPAAPAFGGSWAKLNPPLSPWILDVINSMGFKNMTPVQAGTIPRAVKNQDCVVEAVTGSGKTLAFTIPVLERLSRREEPYKKGEIAAIVVAPTRELATQIHAVFHHFLSSLIPPESEEETGDVEAHAPPFASSSRSPSPQTPDKPLFPLPMLVTSGTPTPYETFQSTHPSILIGTPGRLAAFLLNPRGLAIVRVSELDVLVLDEADRLLSSPDHRRDVERIMRHLPKQRRTHLFSATMTDAVEEMIGLGLRNPVRIVVNLKDKRKDGEEPKERRTPMALQNTYLVCRHAEKTLQLIRLLLCESTKHERSKFIVYFSTCAAVDYFYRILSRLPSLSKFHLTSFHGELPPKIRETALSTFTSHPSSHLSPAVLLCTDVAARGVDFLDIDVVIQYDAPTDPKTFSHRAGRTARAGRRGKAVVLLGKGREEDYVGTFQSANAELMKRKRQKAQRSILDFLNIRKIPLTKQPYINAYLEEVDTPQALDPEATTLLHSIRQIILTDRELSDKAAKSFVSAFRAYSKHEASFIFRTLDFDFNSQAISFGLLRLPAMPEIKDWKKKKEAERQRLEKIKSEGGEVEEKEIIEWEDAGVNWDTFAYASRQREAARLATLAQRADNQSSNDAARAEARAKRKIKAEMREAWSEQKERKVRKEERKEKKDAKKKYEWELEQANGEGDRQSDLANIAKAQAERKKRREREEESWDEEIGKEYKSLKREIKEEKSVKESSKGGAGGGGIGGGMFDDLE.

The short motif at 15–43 (WAKLNPPLSPWILDVINSMGFKNMTPVQA) is the Q motif element. Residues 46-260 (IPRAVKNQDC…GLGLRNPVRI (215 aa)) enclose the Helicase ATP-binding domain. 59–66 (AVTGSGKT) contacts ATP. The segment at 119 to 156 (ESEEETGDVEAHAPPFASSSRSPSPQTPDKPLFPLPML) is disordered. Positions 132-142 (PPFASSSRSPS) are enriched in low complexity. Residues 143 to 152 (PQTPDKPLFP) show a composition bias toward pro residues. The DEAD box signature appears at 207–210 (DEAD). The region spanning 295-460 (KTLQLIRLLL…KAQRSILDFL (166 aa)) is the Helicase C-terminal domain. The interval 614–748 (AQRADNQSSN…IGGGMFDDLE (135 aa)) is disordered. Basic and acidic residues-rich tracts occupy residues 626–669 (ARAE…KYEW) and 708–730 (EIGK…KESS). The segment covering 732 to 748 (GGAGGGGIGGGMFDDLE) has biased composition (gly residues).

The protein belongs to the DEAD box helicase family. DDX55/SPB4 subfamily. Component of pre-60S ribosomal complexes.

The protein resides in the nucleus. It is found in the nucleolus. The catalysed reaction is ATP + H2O = ADP + phosphate + H(+). In terms of biological role, ATP-binding RNA helicase involved in the biogenesis of 60S ribosomal subunits. Binds 90S pre-ribosomal particles and dissociates from pre-60S ribosomal particles after processing of 27SB pre-rRNA. Required for the normal formation of 18S rRNA through the processing of pre-rRNAs at sites A0, A1 and A2, and the normal formation of 25S and 5.8S rRNAs through the processing of pre-rRNAs at sites C1 and C2. This Cryptococcus neoformans var. neoformans serotype D (strain B-3501A) (Filobasidiella neoformans) protein is ATP-dependent rRNA helicase SPB4.